A 915-amino-acid polypeptide reads, in one-letter code: Alanine--tRNA ligase (915 aa).

Zn(2+) contacts are provided by His609, His613, Cys712, and His716.

It belongs to the class-II aminoacyl-tRNA synthetase family. Requires Zn(2+) as cofactor.

Its subcellular location is the cytoplasm. It carries out the reaction tRNA(Ala) + L-alanine + ATP = L-alanyl-tRNA(Ala) + AMP + diphosphate. Its function is as follows. Catalyzes the attachment of alanine to tRNA(Ala) in a two-step reaction: alanine is first activated by ATP to form Ala-AMP and then transferred to the acceptor end of tRNA(Ala). Also edits incorrectly charged Ser-tRNA(Ala) and Gly-tRNA(Ala) via its editing domain. The protein is Alanine--tRNA ligase of Methanoculleus marisnigri (strain ATCC 35101 / DSM 1498 / JR1).